We begin with the raw amino-acid sequence, 134 residues long: Tripartite terminase subunit 2 (134 aa).

This sequence belongs to the herpesviridae TRM2 protein family. In terms of assembly, associates with TRM1 and TRM3 to form the tripartite terminase complex.

It localises to the host nucleus. Its function is as follows. Component of the molecular motor that translocates viral genomic DNA in empty capsid during DNA packaging. Forms a tripartite terminase complex together with TRM1 and TRM3 in the host cytoplasm. Once the complex reaches the host nucleus, it interacts with the capsid portal vertex. This portal forms a ring in which genomic DNA is translocated into the capsid. The protein is Tripartite terminase subunit 2 of Gallus gallus (Chicken).